A 263-amino-acid chain; its full sequence is Chymotrypsinogen 2 (263 aa).

An N-terminal signal peptide occupies residues 1–18; sequence MAFLWLLSCFALLGTAFG. 5 cysteine pairs are disulfide-bonded: Cys-19–Cys-140, Cys-60–Cys-76, Cys-154–Cys-219, Cys-186–Cys-200, and Cys-209–Cys-238. In terms of domain architecture, Peptidase S1 spans 34–261; it reads IVNGEDAVPG…LIPWVQQILQ (228 aa). Residue His-75 is the Charge relay system of the active site. Ser-93 carries the phosphoserine modification. Residue Asp-120 is the Charge relay system of the active site. Catalysis depends on Ser-213, which acts as the Charge relay system.

Belongs to the peptidase S1 family.

It is found in the secreted. It localises to the extracellular space. The catalysed reaction is Preferential cleavage: Tyr-|-Xaa, Trp-|-Xaa, Phe-|-Xaa, Leu-|-Xaa.. This is Chymotrypsinogen 2 (CTRB1) from Canis lupus familiaris (Dog).